A 119-amino-acid polypeptide reads, in one-letter code: Ribosome-binding factor A (119 aa).

This sequence belongs to the RbfA family. As to quaternary structure, monomer. Binds 30S ribosomal subunits, but not 50S ribosomal subunits or 70S ribosomes.

The protein resides in the cytoplasm. In terms of biological role, one of several proteins that assist in the late maturation steps of the functional core of the 30S ribosomal subunit. Associates with free 30S ribosomal subunits (but not with 30S subunits that are part of 70S ribosomes or polysomes). Required for efficient processing of 16S rRNA. May interact with the 5'-terminal helix region of 16S rRNA. In Lactococcus lactis subsp. cremoris (strain SK11), this protein is Ribosome-binding factor A.